Reading from the N-terminus, the 96-residue chain is DNA-directed RNA polymerase subunit Rpo11 (96 aa).

This sequence belongs to the archaeal Rpo11/eukaryotic RPB11/RPC19 RNA polymerase subunit family. As to quaternary structure, part of the RNA polymerase complex.

It is found in the cytoplasm. The enzyme catalyses RNA(n) + a ribonucleoside 5'-triphosphate = RNA(n+1) + diphosphate. Its function is as follows. DNA-dependent RNA polymerase (RNAP) catalyzes the transcription of DNA into RNA using the four ribonucleoside triphosphates as substrates. The protein is DNA-directed RNA polymerase subunit Rpo11 of Methanococcus maripaludis (strain C6 / ATCC BAA-1332).